Here is a 144-residue protein sequence, read N- to C-terminus: Ribonuclease H (144 aa).

Residues M1–E141 form the RNase H type-1 domain. D9, E47, D69, and D133 together coordinate Mg(2+).

Belongs to the RNase H family. Monomer. Mg(2+) serves as cofactor.

The protein localises to the cytoplasm. It carries out the reaction Endonucleolytic cleavage to 5'-phosphomonoester.. Functionally, endonuclease that specifically degrades the RNA of RNA-DNA hybrids. This chain is Ribonuclease H, found in Janthinobacterium sp. (strain Marseille) (Minibacterium massiliensis).